The sequence spans 259 residues: Leucine-rich repeat-containing protein 61 (259 aa).

LRR repeat units lie at residues S32–L53, G54–R75, Q76–E97, and N98–A119. An LRRCT domain is found at N138–D178.

This chain is Leucine-rich repeat-containing protein 61 (LRRC61), found in Homo sapiens (Human).